Here is a 480-residue protein sequence, read N- to C-terminus: Cytochrome b-c1 complex subunit 1, mitochondrial (480 aa).

The N-terminal 34 residues, 1 to 34 (MAASAVCRAACSGTQALLRTCRSPALLRLPALRG), are a transit peptide targeting the mitochondrion. 2 positions are modified to N6-acetyllysine: Lys111 and Lys138. At Lys163 the chain carries N6-acetyllysine; alternate. Residue Lys163 is modified to N6-succinyllysine; alternate. Ser212 is modified (phosphoserine). At Thr214 the chain carries Phosphothreonine.

The protein belongs to the peptidase M16 family. UQCRC1/QCR1 subfamily. As to quaternary structure, component of the ubiquinol-cytochrome c oxidoreductase (cytochrome b-c1 complex, complex III, CIII), a multisubunit enzyme composed of 11 subunits. The complex is composed of 3 respiratory subunits cytochrome b, cytochrome c1 and Rieske protein UQCRFS1, 2 core protein subunits UQCRC1/QCR1 and UQCRC2/QCR2, and 6 low-molecular weight protein subunits UQCRH/QCR6, UQCRB/QCR7, UQCRQ/QCR8, UQCR10/QCR9, UQCR11/QCR10 and subunit 9, the cleavage product of Rieske protein UQCRFS1. The complex exists as an obligatory dimer and forms supercomplexes (SCs) in the inner mitochondrial membrane with NADH-ubiquinone oxidoreductase (complex I, CI) and cytochrome c oxidase (complex IV, CIV), resulting in different assemblies (supercomplex SCI(1)III(2)IV(1) and megacomplex MCI(2)III(2)IV(2)). Interacts with UQCC6. Interacts with STMP1.

The protein localises to the mitochondrion inner membrane. Its function is as follows. Component of the ubiquinol-cytochrome c oxidoreductase, a multisubunit transmembrane complex that is part of the mitochondrial electron transport chain which drives oxidative phosphorylation. The respiratory chain contains 3 multisubunit complexes succinate dehydrogenase (complex II, CII), ubiquinol-cytochrome c oxidoreductase (cytochrome b-c1 complex, complex III, CIII) and cytochrome c oxidase (complex IV, CIV), that cooperate to transfer electrons derived from NADH and succinate to molecular oxygen, creating an electrochemical gradient over the inner membrane that drives transmembrane transport and the ATP synthase. The cytochrome b-c1 complex catalyzes electron transfer from ubiquinol to cytochrome c, linking this redox reaction to translocation of protons across the mitochondrial inner membrane, with protons being carried across the membrane as hydrogens on the quinol. In the process called Q cycle, 2 protons are consumed from the matrix, 4 protons are released into the intermembrane space and 2 electrons are passed to cytochrome c. The 2 core subunits UQCRC1/QCR1 and UQCRC2/QCR2 are homologous to the 2 mitochondrial-processing peptidase (MPP) subunits beta-MPP and alpha-MPP respectively, and they seem to have preserved their MPP processing properties. May be involved in the in situ processing of UQCRFS1 into the mature Rieske protein and its mitochondrial targeting sequence (MTS)/subunit 9 when incorporated into complex III. Seems to play an important role in the maintenance of proper mitochondrial function in nigral dopaminergic neurons. The protein is Cytochrome b-c1 complex subunit 1, mitochondrial (Uqcrc1) of Rattus norvegicus (Rat).